The following is an 812-amino-acid chain: Valine--tRNA ligase (812 aa).

Positions 47–57 (PTISGQLHIGH) match the 'HIGH' region motif. The 'KMSKS' region motif lies at 536–540 (KMSKS). K539 contributes to the ATP binding site.

The protein belongs to the class-I aminoacyl-tRNA synthetase family. ValS type 2 subfamily. In terms of assembly, monomer.

It localises to the cytoplasm. It catalyses the reaction tRNA(Val) + L-valine + ATP = L-valyl-tRNA(Val) + AMP + diphosphate. Functionally, catalyzes the attachment of valine to tRNA(Val). As ValRS can inadvertently accommodate and process structurally similar amino acids such as threonine, to avoid such errors, it has a 'posttransfer' editing activity that hydrolyzes mischarged Thr-tRNA(Val) in a tRNA-dependent manner. The chain is Valine--tRNA ligase from Ehrlichia ruminantium (strain Gardel).